We begin with the raw amino-acid sequence, 477 residues long: Methylenetetrahydrofolate--tRNA-(uracil-5-)-methyltransferase TrmFO (477 aa).

15–20 provides a ligand contact to FAD; sequence GAGLAG.

Belongs to the MnmG family. TrmFO subfamily. FAD serves as cofactor.

It localises to the cytoplasm. It carries out the reaction uridine(54) in tRNA + (6R)-5,10-methylene-5,6,7,8-tetrahydrofolate + NADH + H(+) = 5-methyluridine(54) in tRNA + (6S)-5,6,7,8-tetrahydrofolate + NAD(+). The enzyme catalyses uridine(54) in tRNA + (6R)-5,10-methylene-5,6,7,8-tetrahydrofolate + NADPH + H(+) = 5-methyluridine(54) in tRNA + (6S)-5,6,7,8-tetrahydrofolate + NADP(+). Functionally, catalyzes the folate-dependent formation of 5-methyl-uridine at position 54 (M-5-U54) in all tRNAs. In Nitrobacter winogradskyi (strain ATCC 25391 / DSM 10237 / CIP 104748 / NCIMB 11846 / Nb-255), this protein is Methylenetetrahydrofolate--tRNA-(uracil-5-)-methyltransferase TrmFO.